Reading from the N-terminus, the 316-residue chain is Exonuclease DPD1, chloroplastic/mitochondrial (316 aa).

Residues methionine 1–arginine 63 constitute a chloroplast and mitochondrion transit peptide. One can recognise an Exonuclease domain in the interval isoleucine 112–phenylalanine 282. Residues aspartate 115 and glutamate 117 each contribute to the Mg(2+) site. Histidine 269 acts as the Proton donor/acceptor in catalysis. Aspartate 274 is a Mg(2+) binding site.

This sequence belongs to the exonuclease superfamily. TREX family. Mg(2+) serves as cofactor. In terms of tissue distribution, highly expressed in mature pollen grains. Detected in flowers, senescing leaves and roots.

Its subcellular location is the plastid. It localises to the chloroplast. It is found in the mitochondrion. Its activity is regulated as follows. Inhibited by free nucleotide diphosphates (NDPs). Its function is as follows. Exonuclease required for organelle DNA degradation during pollen development. Plays non-essential roles in maternal inheritance. May be part of the DNA salvage machinery. In Arabidopsis thaliana (Mouse-ear cress), this protein is Exonuclease DPD1, chloroplastic/mitochondrial.